The chain runs to 1040 residues: V(D)J recombination-activating protein 1 (1040 aa).

A compositionally biased stretch (basic and acidic residues) spans 39–53; sequence EKAPEEAQKEKDSSE. Residues 39–71 are disordered; it reads EKAPEEAQKEKDSSEGKPYLEQSPVVPEKPGGQ. Residue Lys233 forms a Glycyl lysine isopeptide (Lys-Gly) (interchain with G-Cter in ubiquitin) linkage. Cys266, His270, Cys290, Cys293, His295, Cys305, His307, Cys310, Cys313, Cys325, Cys328, Cys355, Cys360, His372, and His376 together coordinate Zn(2+). The RING-type zinc finger occupies 290–329; sequence CQICEHILADPVETSCKHLFCRICILRCLKVMGSYCPSCR. Residues 351 to 380 form an RAG1-type zinc finger; sequence LMVKCPAQDCNEEVSLEKYNHHVSSHKESK. A DNA-binding region (NBD) is located at residues 389–456; it reads GGRPRQHLLS…QADELEAIMQ (68 aa). Asp600, Asp708, and Glu962 together coordinate a divalent metal cation.

It belongs to the RAG1 family. As to quaternary structure, homodimer. Component of the RAG complex composed of core components RAG1 and RAG2, and associated component HMGB1 or HMGB2. Interacts with DCAF1, leading to recruitment of the CUL4A-RBX1-DDB1-DCAF1/VPRBP complex to ubiquitinate proteins and limit error-prone repair during V(D)J recombination. Mg(2+) is required as a cofactor. Mn(2+) serves as cofactor. Post-translationally, autoubiquitinated in the presence of CDC34/UBCH3. In terms of tissue distribution, maturing lymphoid cells and central nervous system.

The protein resides in the nucleus. The enzyme catalyses S-ubiquitinyl-[E2 ubiquitin-conjugating enzyme]-L-cysteine + [acceptor protein]-L-lysine = [E2 ubiquitin-conjugating enzyme]-L-cysteine + N(6)-ubiquitinyl-[acceptor protein]-L-lysine.. Its function is as follows. Catalytic component of the RAG complex, a multiprotein complex that mediates the DNA cleavage phase during V(D)J recombination. V(D)J recombination assembles a diverse repertoire of immunoglobulin and T-cell receptor genes in developing B and T-lymphocytes through rearrangement of different V (variable), in some cases D (diversity), and J (joining) gene segments. In the RAG complex, RAG1 mediates the DNA-binding to the conserved recombination signal sequences (RSS) and catalyzes the DNA cleavage activities by introducing a double-strand break between the RSS and the adjacent coding segment. RAG2 is not a catalytic component but is required for all known catalytic activities. DNA cleavage occurs in 2 steps: a first nick is introduced in the top strand immediately upstream of the heptamer, generating a 3'-hydroxyl group that can attack the phosphodiester bond on the opposite strand in a direct transesterification reaction, thereby creating 4 DNA ends: 2 hairpin coding ends and 2 blunt, 5'-phosphorylated ends. The chromatin structure plays an essential role in the V(D)J recombination reactions and the presence of histone H3 trimethylated at 'Lys-4' (H3K4me3) stimulates both the nicking and haipinning steps. The RAG complex also plays a role in pre-B cell allelic exclusion, a process leading to expression of a single immunoglobulin heavy chain allele to enforce clonality and monospecific recognition by the B-cell antigen receptor (BCR) expressed on individual B-lymphocytes. The introduction of DNA breaks by the RAG complex on one immunoglobulin allele induces ATM-dependent repositioning of the other allele to pericentromeric heterochromatin, preventing accessibility to the RAG complex and recombination of the second allele. In addition to its endonuclease activity, RAG1 also acts as an E3 ubiquitin-protein ligase that mediates monoubiquitination of histone H3. Histone H3 monoubiquitination is required for the joining step of V(D)J recombination. Mediates polyubiquitination of KPNA1. This Mus musculus (Mouse) protein is V(D)J recombination-activating protein 1 (Rag1).